The chain runs to 66 residues: KEGYIVNYYDGCKYACAKLGDNDYCLRECKARYGKGAGGYCYAFGCWCTHLYEQAVVWPLPKKKCN.

The region spanning 1-66 (KEGYIVNYYD…VWPLPKKKCN (66 aa)) is the LCN-type CS-alpha/beta domain. 4 cysteine pairs are disulfide-bonded: Cys-12/Cys-65, Cys-16/Cys-41, Cys-25/Cys-46, and Cys-29/Cys-48.

As to expression, expressed by the venom gland.

Its subcellular location is the secreted. Its activity is regulated as follows. Is susceptible to be neutralized by human antibodies scFvs 10FG2 and HV. Functionally, beta toxins bind voltage-independently at site-4 of sodium channels (Nav) and reduces peak current and shifts the voltage of activation toward more negative potentials thereby affecting sodium channel activation and promoting spontaneous and repetitive firing. This toxin is moderately toxic to mice. This Centruroides villegasi (Scorpion) protein is Beta-mammal toxin Cv5.